Consider the following 702-residue polypeptide: Polyribonucleotide nucleotidyltransferase (702 aa).

Mg(2+) is bound by residues Asp484 and Asp490. The 60-residue stretch at 551-610 (PHIESFKIAVEKIGALIGPGGKTVKSLSDQYRVTINTDSDGTVTVSGRDAQSVFDAKVAV) folds into the KH domain. The S1 motif domain occupies 620–688 (GRVYQGVVKR…RMGRLNLSYI (69 aa)).

Belongs to the polyribonucleotide nucleotidyltransferase family. The cofactor is Mg(2+).

It localises to the cytoplasm. It catalyses the reaction RNA(n+1) + phosphate = RNA(n) + a ribonucleoside 5'-diphosphate. Its function is as follows. Involved in mRNA degradation. Catalyzes the phosphorolysis of single-stranded polyribonucleotides processively in the 3'- to 5'-direction. In Treponema pallidum (strain Nichols), this protein is Polyribonucleotide nucleotidyltransferase.